Here is a 216-residue protein sequence, read N- to C-terminus: 3-keto-L-gulonate-6-phosphate decarboxylase UlaD (216 aa).

Substrate is bound at residue D11. Residues E33 and D62 each coordinate Mg(2+). R192 lines the substrate pocket.

It belongs to the HPS/KGPDC family. KGPDC subfamily. Homodimer. Requires Mg(2+) as cofactor.

It catalyses the reaction 3-dehydro-L-gulonate 6-phosphate + H(+) = L-xylulose 5-phosphate + CO2. It participates in cofactor degradation; L-ascorbate degradation; D-xylulose 5-phosphate from L-ascorbate: step 2/4. Functionally, catalyzes the decarboxylation of 3-keto-L-gulonate-6-P into L-xylulose-5-P. Is involved in the anaerobic L-ascorbate utilization. This is 3-keto-L-gulonate-6-phosphate decarboxylase UlaD from Escherichia coli O139:H28 (strain E24377A / ETEC).